Here is a 282-residue protein sequence, read N- to C-terminus: Large ribosomal subunit protein uL2 (282 aa).

Residues 230-282 form a disordered region; sequence AMNPIDHPLGGGEGRSSGGRHPVSPWGMPAKGYKTRDKKKASSRLIVKRRGQK. Residues 265–282 are compositionally biased toward basic residues; that stretch reads RDKKKASSRLIVKRRGQK.

It belongs to the universal ribosomal protein uL2 family. Part of the 50S ribosomal subunit. Forms a bridge to the 30S subunit in the 70S ribosome.

In terms of biological role, one of the primary rRNA binding proteins. Required for association of the 30S and 50S subunits to form the 70S ribosome, for tRNA binding and peptide bond formation. It has been suggested to have peptidyltransferase activity; this is somewhat controversial. Makes several contacts with the 16S rRNA in the 70S ribosome. This chain is Large ribosomal subunit protein uL2, found in Desulfovibrio desulfuricans (strain ATCC 27774 / DSM 6949 / MB).